Reading from the N-terminus, the 525-residue chain is uncharacterized protein (525 aa).

2 helical membrane passes run 36 to 56 (AVAA…TLAL) and 61 to 81 (ALPA…AAAI). Positions 173 to 228 (SAVDIRLERTSADGPQFAHIYCEMTPLRDAEGNLLAIVAQSRDVSEEARLQAEAAA) constitute a PAC domain. One can recognise a Histidine kinase domain in the interval 246 to 466 (AVSHELRTPL…VIVVTIPSDA (221 aa)). His-249 bears the Phosphohistidine; by autocatalysis mark. Residues 506 to 525 (LHTGEIGREGGHGAAQAKTA) are disordered.

It is found in the cell membrane. The catalysed reaction is ATP + protein L-histidine = ADP + protein N-phospho-L-histidine.. This is an uncharacterized protein from Rhizobium meliloti (strain 1021) (Ensifer meliloti).